The following is a 384-amino-acid chain: MSEYSVFTSESVSEGHPDKMADQISDAVLDAILTDDPNARVAVETLVKTGMAIVAGEVRTSTYVDLEDLIRQVILDIGYNSSDVGFDGASCAVLNAIGKQSADIAMGVDEGDQKDLGAGDQGLMFGYATNETAVLMPAPIFYAHRLVEKQAQLRKSGELPWLRPDAKSQVTLRYENGKPVAVDAVVLSTQHSPSVQQAEIHEAVRELIIKNVLPAEWLHKDTQYHINPTGQFIIGGPVGDCGLTGRKIIVDSYGGMARHGGGAFSGKDPSKVDRSAAYAGRYVAKNIVAAGLADKCEIQVSYAIGVAEPTSISINTFGTGKLPDAEIIKLVREHFDLRPRGLIEMLNLKRPIYRQTAAYGHFGRELPDFTWEKTDKADALKKAL.

An ATP-binding site is contributed by His-16. Residue Asp-18 participates in Mg(2+) binding. Residue Glu-44 coordinates K(+). The L-methionine site is built by Glu-57 and Gln-100. Residues 100 to 110 are flexible loop; sequence QSADIAMGVDE. ATP-binding positions include 165 to 167, Asp-240, 246 to 247, Ala-263, and Lys-267; these read DAK and RK. Residue Asp-240 coordinates L-methionine. Lys-271 is a binding site for L-methionine.

Belongs to the AdoMet synthase family. In terms of assembly, homotetramer; dimer of dimers. It depends on Mg(2+) as a cofactor. K(+) is required as a cofactor.

It is found in the cytoplasm. The enzyme catalyses L-methionine + ATP + H2O = S-adenosyl-L-methionine + phosphate + diphosphate. It functions in the pathway amino-acid biosynthesis; S-adenosyl-L-methionine biosynthesis; S-adenosyl-L-methionine from L-methionine: step 1/1. Functionally, catalyzes the formation of S-adenosylmethionine (AdoMet) from methionine and ATP. The overall synthetic reaction is composed of two sequential steps, AdoMet formation and the subsequent tripolyphosphate hydrolysis which occurs prior to release of AdoMet from the enzyme. The sequence is that of S-adenosylmethionine synthase from Cellvibrio japonicus (strain Ueda107) (Pseudomonas fluorescens subsp. cellulosa).